Consider the following 130-residue polypeptide: Small ribosomal subunit protein uS8 (130 aa).

Belongs to the universal ribosomal protein uS8 family. Part of the 30S ribosomal subunit. Contacts proteins S5 and S12.

In terms of biological role, one of the primary rRNA binding proteins, it binds directly to 16S rRNA central domain where it helps coordinate assembly of the platform of the 30S subunit. This chain is Small ribosomal subunit protein uS8, found in Enterobacter sp. (strain 638).